The primary structure comprises 560 residues: Chaperonin GroEL 2 (560 aa).

Residues 29 to 32 (TLGP), 86 to 90 (DGTTT), Gly-413, 478 to 480 (NAA), and Asp-494 each bind ATP.

It belongs to the chaperonin (HSP60) family. As to quaternary structure, forms a cylinder of 14 subunits composed of two heptameric rings stacked back-to-back. Interacts with the co-chaperonin GroES.

It localises to the cytoplasm. The enzyme catalyses ATP + H2O + a folded polypeptide = ADP + phosphate + an unfolded polypeptide.. Together with its co-chaperonin GroES, plays an essential role in assisting protein folding. The GroEL-GroES system forms a nano-cage that allows encapsulation of the non-native substrate proteins and provides a physical environment optimized to promote and accelerate protein folding. This is Chaperonin GroEL 2 from Trichormus variabilis (strain ATCC 29413 / PCC 7937) (Anabaena variabilis).